Here is a 501-residue protein sequence, read N- to C-terminus: Solute carrier family 2, facilitated glucose transporter member 5 (501 aa).

At Met1 the chain carries N-acetylmethionine. The Cytoplasmic segment spans residues 1–17 (MEEKHQEETGELTLVLA). Residues 18 to 38 (LATLIAAFGSSFQYGYNVAAV) traverse the membrane as a helical segment. Tyr31 serves as a coordination point for D-fructose. The Extracellular portion of the chain corresponds to 39 to 67 (NSPSEFMQQFYNDTYYDRNEENIESFTLT). The N-linked (GlcNAc...) asparagine glycan is linked to Asn50. The helical transmembrane segment at 68–90 (LLWSLTVSMFPFGGFIGSLMVGT) threads the bilayer. At 91–97 (LVNKLGR) the chain is on the cytoplasmic side. A helical transmembrane segment spans residues 98–118 (KGALLFNNIFSILPAILMGCS). The Extracellular portion of the chain corresponds to 119–125 (QIAQSFE). Residues 126–148 (LIIISRLLVGICAGISSNVVPMY) form a helical membrane-spanning segment. The Cytoplasmic portion of the chain corresponds to 149–160 (LGELAPKNLRGA). A helical membrane pass occupies residues 161–181 (LGVVPQLFITVGILVAQLFGL). Gln166 contributes to the D-fructose binding site. Residues 182–191 (RSLLANEDGW) are Extracellular-facing. Residues 192-212 (PVLLGLTGVPAGLQLLLLPFF) traverse the membrane as a helical segment. The Cytoplasmic portion of the chain corresponds to 213–276 (PESPRYLLIQ…LFTMQSLRWQ (64 aa)). The chain crosses the membrane as a helical span at residues 277–297 (LISMIVLMAGQQLSGVNAIYY). D-fructose contacts are provided by residues Gln287 and 295-297 (IYY). The Extracellular segment spans residues 298-312 (YADQIYLSAGVKSDD). A helical membrane pass occupies residues 313–333 (VQYVTAGTGAVNVFMTILTIF). Topologically, residues 334–341 (VVELWGRR) are cytoplasmic. Residues 342–362 (FLLLVGFSTCLIACLVLTAAL) traverse the membrane as a helical segment. The Extracellular portion of the chain corresponds to 363 to 370 (ALQNTISW). Residues 371-393 (MPYISIVCVIVYVIGHALGPSPI) form a helical membrane-spanning segment. His386 is a binding site for D-fructose. At 394–411 (PALLITEIFLQSSRPAAY) the chain is on the cytoplasmic side. Residues 412–432 (MIGGSVHWLSNFTVGLIFPFI) traverse the membrane as a helical segment. 418–419 (HW) is a D-fructose binding site. Residues 433 to 438 (QMGLGP) are Extracellular-facing. A helical transmembrane segment spans residues 439 to 459 (YSFIIFATICFLTTIYIFMVV). The Cytoplasmic segment spans residues 460–501 (PETKGRTFIEINQIFTMKNKVSDVYPKKEEELGALPHAILEQ).

The protein belongs to the major facilitator superfamily. Sugar transporter (TC 2.A.1.1) family. Glucose transporter subfamily. Detected at the apical membrane of villi in the jejunum. Detected in jejunum mucosa. Detected in epididymis and whole testis (at protein level). Detected in small intestine, kidney and testis. Detected in cochlea, but not in inner or outer cochlear hair cells.

It is found in the apical cell membrane. The protein resides in the cell membrane. It localises to the sarcolemma. It carries out the reaction D-fructose(out) = D-fructose(in). With respect to regulation, fructose uptake is inhibited by cytochalasin B. In terms of biological role, functions as a fructose transporter that has only low activity with other monosaccharides. Can mediate the uptake of deoxyglucose, but with low efficiency. Essential for fructose uptake in the small intestine. Plays a role in the regulation of salt uptake and blood pressure in response to dietary fructose. Required for the development of high blood pressure in response to high dietary fructose intake. This is Solute carrier family 2, facilitated glucose transporter member 5 from Mus musculus (Mouse).